Reading from the N-terminus, the 623-residue chain is Quinoprotein ethanol dehydrogenase (623 aa).

Positions 1-34 (MTIRSLPAALSPLSMAVQAVLLVSSLALAPAANA) are cleaved as a signal peptide. Asp-45 and Asn-51 together coordinate Ca(2+). Position 95 (Glu-95) interacts with pyrroloquinoline quinone. Cys-139 and Cys-140 are joined by a disulfide. Residues Arg-145, Thr-189, and 207 to 209 (HGS) contribute to the pyrroloquinoline quinone site. Residue Glu-213 coordinates Ca(2+). The interval 242-279 (GRLNGKDSTPTGDVKAPSWPDDPTTETGKVESWSHGGG) is disordered. The Ca(2+) site is built by Asn-300 and Asp-350. Asp-350 serves as the catalytic Proton acceptor. A pyrroloquinoline quinone-binding site is contributed by Arg-378. The interval 414–436 (RPVENEGQRPAKPLPGETKGKPV) is disordered. 2 WD repeats span residues 515 to 556 (EHNE…ELWK) and 559 to 601 (TGSG…LTKP). Positions 523 and 587 each coordinate pyrroloquinoline quinone.

Belongs to the bacterial PQQ dehydrogenase family. In terms of assembly, homodimer. Pyrroloquinoline quinone serves as cofactor. The cofactor is Ca(2+).

It is found in the periplasm. The catalysed reaction is a primary alcohol + 2 Fe(III)-[cytochrome c] = an aldehyde + 2 Fe(II)-[cytochrome c] + 2 H(+). The enzyme catalyses ethanol + 2 Fe(III)-[cytochrome c] = acetaldehyde + 2 Fe(II)-[cytochrome c] + 2 H(+). It carries out the reaction ethanol + A = acetaldehyde + AH2. It catalyses the reaction 1-propanol + 2 Fe(III)-[cytochrome c] = propanal + 2 Fe(II)-[cytochrome c] + 2 H(+). It functions in the pathway alcohol metabolism; ethanol degradation; acetate from ethanol: step 1/2. Enhanced by the presence of ethylamine or NH4(+) ions. In terms of biological role, catalyzes the oxidation of ethanol and other primary alcohols to the corresponding aldehydes, except methanol, which is not a substrate. Uses a specific inducible cytochrome c550, encoded by the adjacent gene in the locus, as electron acceptor. Is a key enzyme of the carbon and energy metabolism during growth of P.putida on ethanol as the sole carbon and energy source. Displays lower activity on secondary alcohols, aldehydes and diols. Is not active with sugar alcohols such as glycerol and D-sorbitol. In vitro, reacts well with phenazine methosulfate (PMS) as an electron acceptor but not with NAD(P), potassium ferricyanide, or molecular oxygen. The polypeptide is Quinoprotein ethanol dehydrogenase (Pseudomonas putida (Arthrobacter siderocapsulatus)).